The following is a 739-amino-acid chain: NAD(P)H-quinone oxidoreductase subunit 5, chloroplastic (739 aa).

16 helical membrane-spanning segments follow: residues 9-29 (WIIP…LLLF), 40-60 (WSFQ…NLSI), 89-109 (IDPL…MVLI), 125-145 (FAYM…SNLI), 147-167 (IYIF…FWFT), 184-204 (IGDF…GSFE), 224-244 (LFVT…SAQF), 258-278 (TPIS…FLVA), 289-311 (YIMN…LALA), 318-338 (GLAF…GMGS), 354-374 (ALLF…VGYS), 396-416 (NTFL…CFWS), 427-447 (YSTI…FYIF), 546-566 (LFPL…GIPF), 605-625 (VSSV…YKPP), and 718-738 (ISSY…VFFI).

This sequence belongs to the complex I subunit 5 family. NDH is composed of at least 16 different subunits, 5 of which are encoded in the nucleus.

The protein resides in the plastid. It is found in the chloroplast thylakoid membrane. It carries out the reaction a plastoquinone + NADH + (n+1) H(+)(in) = a plastoquinol + NAD(+) + n H(+)(out). It catalyses the reaction a plastoquinone + NADPH + (n+1) H(+)(in) = a plastoquinol + NADP(+) + n H(+)(out). In terms of biological role, NDH shuttles electrons from NAD(P)H:plastoquinone, via FMN and iron-sulfur (Fe-S) centers, to quinones in the photosynthetic chain and possibly in a chloroplast respiratory chain. The immediate electron acceptor for the enzyme in this species is believed to be plastoquinone. Couples the redox reaction to proton translocation, and thus conserves the redox energy in a proton gradient. The polypeptide is NAD(P)H-quinone oxidoreductase subunit 5, chloroplastic (ndhF) (Coffea arabica (Arabian coffee)).